A 367-amino-acid polypeptide reads, in one-letter code: Mitochondrial distribution and morphology protein 34 (367 aa).

The region spanning 1-197 (MSFNFTWPEF…LPSIIHRLSQ (197 aa)) is the SMP-LTD domain. Disordered regions lie at residues 267–311 (QGLK…ALSS) and 347–367 (PAHR…FHLS). The span at 286–302 (FHTTSRVRVPSSLESNA) shows a compositional bias: polar residues.

This sequence belongs to the MDM34 family. Component of the ER-mitochondria encounter structure (ERMES) or MDM complex, composed of MMM1, MDM10, MDM12 and MDM34.

Its subcellular location is the mitochondrion outer membrane. Its function is as follows. Component of the ERMES/MDM complex, which serves as a molecular tether to connect the endoplasmic reticulum (ER) and mitochondria. Components of this complex are involved in the control of mitochondrial shape and protein biogenesis, and function in nonvesicular lipid trafficking between the ER and mitochondria. MDM34 is required for the interaction of the ER-resident membrane protein MMM1 and the outer mitochondrial membrane-resident beta-barrel protein MDM10. The polypeptide is Mitochondrial distribution and morphology protein 34 (Malassezia globosa (strain ATCC MYA-4612 / CBS 7966) (Dandruff-associated fungus)).